A 383-amino-acid polypeptide reads, in one-letter code: U-box domain-containing protein 63 (383 aa).

The interval 166-186 is disordered; it reads PDGNVSNSHRNTQQKRDFASV. Residues 201–273 form the U-box domain; sequence SLKAILSDPV…HAFRQEEDSD (73 aa).

It catalyses the reaction S-ubiquitinyl-[E2 ubiquitin-conjugating enzyme]-L-cysteine + [acceptor protein]-L-lysine = [E2 ubiquitin-conjugating enzyme]-L-cysteine + N(6)-ubiquitinyl-[acceptor protein]-L-lysine.. It functions in the pathway protein modification; protein ubiquitination. Its function is as follows. Functions as an E3 ubiquitin ligase. This Arabidopsis thaliana (Mouse-ear cress) protein is U-box domain-containing protein 63 (PUB63).